The chain runs to 129 residues: Transcription antitermination protein NusB (129 aa).

Belongs to the NusB family.

Involved in transcription antitermination. Required for transcription of ribosomal RNA (rRNA) genes. Binds specifically to the boxA antiterminator sequence of the ribosomal RNA (rrn) operons. The protein is Transcription antitermination protein NusB of Staphylococcus aureus (strain bovine RF122 / ET3-1).